A 128-amino-acid polypeptide reads, in one-letter code: uncharacterized protein (128 aa).

It to M.jannaschii MJ0766.

This is an uncharacterized protein from Methanocaldococcus jannaschii (strain ATCC 43067 / DSM 2661 / JAL-1 / JCM 10045 / NBRC 100440) (Methanococcus jannaschii).